The primary structure comprises 231 residues: Large ribosomal subunit protein uL1 (231 aa).

The protein belongs to the universal ribosomal protein uL1 family. Part of the 50S ribosomal subunit.

In terms of biological role, binds directly to 23S rRNA. The L1 stalk is quite mobile in the ribosome, and is involved in E site tRNA release. Protein L1 is also a translational repressor protein, it controls the translation of the L11 operon by binding to its mRNA. In Clostridium kluyveri (strain NBRC 12016), this protein is Large ribosomal subunit protein uL1.